The following is a 451-amino-acid chain: Tubulin beta-1 chain (451 aa).

Q11, E73, S142, G146, T147, G148, N208, and N230 together coordinate GTP. A Mg(2+)-binding site is contributed by E73. The tract at residues 430 to 451 (QEATADDEAEFEEEGEVEGEYA) is disordered. Acidic residues predominate over residues 433 to 451 (TADDEAEFEEEGEVEGEYA).

It belongs to the tubulin family. Dimer of alpha and beta chains. A typical microtubule is a hollow water-filled tube with an outer diameter of 25 nm and an inner diameter of 15 nM. Alpha-beta heterodimers associate head-to-tail to form protofilaments running lengthwise along the microtubule wall with the beta-tubulin subunit facing the microtubule plus end conferring a structural polarity. Microtubules usually have 13 protofilaments but different protofilament numbers can be found in some organisms and specialized cells. It depends on Mg(2+) as a cofactor.

The protein resides in the cytoplasm. It is found in the cytoskeleton. In terms of biological role, tubulin is the major constituent of microtubules, a cylinder consisting of laterally associated linear protofilaments composed of alpha- and beta-tubulin heterodimers. Microtubules grow by the addition of GTP-tubulin dimers to the microtubule end, where a stabilizing cap forms. Below the cap, tubulin dimers are in GDP-bound state, owing to GTPase activity of alpha-tubulin. The chain is Tubulin beta-1 chain from Homarus americanus (American lobster).